Consider the following 505-residue polypeptide: ATP synthase subunit alpha, chloroplastic (505 aa).

170–177 contributes to the ATP binding site; sequence GDRQTGKT.

It belongs to the ATPase alpha/beta chains family. F-type ATPases have 2 components, CF(1) - the catalytic core - and CF(0) - the membrane proton channel. CF(1) has five subunits: alpha(3), beta(3), gamma(1), delta(1), epsilon(1). CF(0) has four main subunits: a, b, b' and c.

The protein resides in the plastid. It localises to the chloroplast thylakoid membrane. It catalyses the reaction ATP + H2O + 4 H(+)(in) = ADP + phosphate + 5 H(+)(out). Its function is as follows. Produces ATP from ADP in the presence of a proton gradient across the membrane. The alpha chain is a regulatory subunit. In Oenothera elata subsp. hookeri (Hooker's evening primrose), this protein is ATP synthase subunit alpha, chloroplastic.